The sequence spans 130 residues: Lysozyme C (130 aa).

The region spanning 2–130 (KVYGRCELAA…VNVWIRGCRL (129 aa)) is the C-type lysozyme domain. 4 disulfides stabilise this stretch: C7–C128, C31–C116, C65–C81, and C77–C95. Residues E36 and D53 contribute to the active site.

It belongs to the glycosyl hydrolase 22 family. Monomer.

The protein localises to the secreted. It catalyses the reaction Hydrolysis of (1-&gt;4)-beta-linkages between N-acetylmuramic acid and N-acetyl-D-glucosamine residues in a peptidoglycan and between N-acetyl-D-glucosamine residues in chitodextrins.. In terms of biological role, lysozymes have primarily a bacteriolytic function; those in tissues and body fluids are associated with the monocyte-macrophage system and enhance the activity of immunoagents. In Phasianus versicolor (Green pheasant), this protein is Lysozyme C (LYZ).